Consider the following 264-residue polypeptide: Glutamate racemase (264 aa).

Substrate is bound by residues 10-11 (DS) and 42-43 (YG). Cysteine 73 functions as the Proton donor/acceptor in the catalytic mechanism. Residue 74–75 (NT) participates in substrate binding. Cysteine 183 functions as the Proton donor/acceptor in the catalytic mechanism. Position 184-185 (184-185 (TH)) interacts with substrate.

This sequence belongs to the aspartate/glutamate racemases family.

It catalyses the reaction L-glutamate = D-glutamate. It participates in cell wall biogenesis; peptidoglycan biosynthesis. Provides the (R)-glutamate required for cell wall biosynthesis. This chain is Glutamate racemase, found in Streptococcus pyogenes serotype M4 (strain MGAS10750).